Consider the following 277-residue polypeptide: Trypsin-2 (277 aa).

An N-terminal signal peptide occupies residues 1 to 19 (MSNKIAILLLAVVVAVVAC). The propeptide at 20-50 (AQAQPSRRHHLVHPLLPRFLPRLHRDSNGHR) is activation peptide. Residues 51–276 (VVGGFQIDVS…VRDWVRENSG (226 aa)) form the Peptidase S1 domain. Cysteines 76 and 92 form a disulfide. Residues histidine 91 and aspartate 136 each act as charge relay system in the active site. 2 cysteine pairs are disulfide-bonded: cysteine 201/cysteine 217 and cysteine 228/cysteine 252. Serine 232 (charge relay system) is an active-site residue.

This sequence belongs to the peptidase S1 family. In terms of tissue distribution, midgut.

Its subcellular location is the secreted. The catalysed reaction is Preferential cleavage: Arg-|-Xaa, Lys-|-Xaa.. In terms of biological role, major function may be to aid in digestion of the blood meal. This chain is Trypsin-2 (TRYP2), found in Anopheles gambiae (African malaria mosquito).